Consider the following 215-residue polypeptide: Small ribosomal subunit protein uS7 (215 aa).

It belongs to the universal ribosomal protein uS7 family. In terms of assembly, part of the 30S ribosomal subunit.

Functionally, one of the primary rRNA binding proteins, it binds directly to 16S rRNA where it nucleates assembly of the head domain of the 30S subunit. Is located at the subunit interface close to the decoding center. The sequence is that of Small ribosomal subunit protein uS7 from Pyrococcus abyssi (strain GE5 / Orsay).